The sequence spans 829 residues: Probable beta-glucosidase H (829 aa).

Residue Asn-13 is glycosylated (N-linked (GlcNAc...) asparagine). Asp-225 is an active-site residue. Asn-304, Asn-473, Asn-602, Asn-627, and Asn-664 each carry an N-linked (GlcNAc...) asparagine glycan. In terms of domain architecture, PA14 spans 389–548; the sequence is RMLSNAVIHF…DPEQMVANAV (160 aa).

This sequence belongs to the glycosyl hydrolase 3 family.

It is found in the secreted. The catalysed reaction is Hydrolysis of terminal, non-reducing beta-D-glucosyl residues with release of beta-D-glucose.. It participates in glycan metabolism; cellulose degradation. In terms of biological role, beta-glucosidases are one of a number of cellulolytic enzymes involved in the degradation of cellulosic biomass. Catalyzes the last step releasing glucose from the inhibitory cellobiose. The polypeptide is Probable beta-glucosidase H (bglH) (Aspergillus fumigatus (strain ATCC MYA-4609 / CBS 101355 / FGSC A1100 / Af293) (Neosartorya fumigata)).